Reading from the N-terminus, the 248-residue chain is MAGHSKWANIKHKKAKEDAKRGKIFTKIIRELVSATKQGDPDPESNPRLRAAVEKALSANMTKDTIKRAIERGAGNSDGGEMDELTYEGYGVGGVAVLVETMTDNVNRTVSEVRHAFTKFSGNLGTAGSVAYLFTKRGEIIFDDVSLEDEIMLVALDAGAVDIENDGESLLVITEPDTFGAVKDALDAAGYESSNAEVTMSPSTTALIDNIDDAEKVMKMIDMLEDLDDVQDVHTNVDFTDDVLAQLG.

This sequence belongs to the TACO1 family.

It is found in the cytoplasm. This Psychrobacter sp. (strain PRwf-1) protein is Probable transcriptional regulatory protein PsycPRwf_1013.